We begin with the raw amino-acid sequence, 167 residues long: Leptin (167 aa).

Residues 1–21 (MRCGSLCRFLWLWSCLPYIEA) form the signal peptide. Cys117 and Cys167 form a disulfide bridge.

It belongs to the leptin family.

The protein localises to the secreted. Key player in the regulation of energy balance and body weight control. Once released into the circulation, has central and peripheral effects by binding LEPR, found in many tissues, which results in the activation of several major signaling pathways. In the hypothalamus, acts as an appetite-regulating factor that induces a decrease in food intake and an increase in energy consumption by inducing anorexinogenic factors and suppressing orexigenic neuropeptides, also regulates bone mass and secretion of hypothalamo-pituitary-adrenal hormones. In the periphery, increases basal metabolism, influences reproductive function, regulates pancreatic beta-cell function and insulin secretion, is pro-angiogenic for endothelial cell and affects innate and adaptive immunity. In the arcuate nucleus of the hypothalamus, activates by depolarization POMC neurons inducing FOS and SOCS3 expression to release anorexigenic peptides and inhibits by hyperpolarization NPY neurons inducing SOCS3 with a consequent reduction on release of orexigenic peptides. In addition to its known satiety inducing effect, has a modulatory role in nutrient absorption. In the intestine, reduces glucose absorption by enterocytes by activating PKC and leading to a sequential activation of p38, PI3K and ERK signaling pathways which exerts an inhibitory effect on glucose absorption. Acts as a growth factor on certain tissues, through the activation of different signaling pathways increases expression of genes involved in cell cycle regulation such as CCND1, via JAK2-STAT3 pathway, or VEGFA, via MAPK1/3 and PI3K-AKT1 pathways. May also play an apoptotic role via JAK2-STAT3 pathway and up-regulation of BIRC5 expression. Pro-angiogenic, has mitogenic activity on vascular endothelial cells and plays a role in matrix remodeling by regulating the expression of matrix metalloproteinases (MMPs) and tissue inhibitors of metalloproteinases (TIMPs). In innate immunity, modulates the activity and function of neutrophils by increasing chemotaxis and the secretion of oxygen radicals. Increases phagocytosis by macrophages and enhances secretion of pro-inflammatory mediators. Increases cytotoxic ability of NK cells. Plays a pro-inflammatory role, in synergy with IL1B, by inducing NOS2 which promotes the production of IL6, IL8 and Prostaglandin E2, through a signaling pathway that involves JAK2, PI3K, MAP2K1/MEK1 and MAPK14/p38. In adaptive immunity, promotes the switch of memory T-cells towards T helper-1 cell immune responses. Increases CD4(+)CD25(-) T-cell proliferation and reduces autophagy during TCR (T-cell receptor) stimulation, through MTOR signaling pathway activation and BCL2 up-regulation. This is Leptin (LEP) from Halichoerus grypus (Gray seal).